Here is a 347-residue protein sequence, read N- to C-terminus: Actin-like protein MamK (347 aa).

Residues lysine 9, threonine 20–serine 21, and aspartate 76 each bind ATP. Glutamate 143 contacts Mg(2+). ATP contacts are provided by residues alanine 164–threonine 166, lysine 218–serine 222, and glycine 289.

The protein belongs to the FtsA/MreB family. MamK subfamily. In terms of assembly, forms cytoplasmic filaments. Filaments are parallel (polar) and double-helical. MamK subunits from each of the two strands are juxtaposed, each monomer binds ADP. At cell poles and septa interacts with methyl-accepting chemotaxis protein Amb0944 (MCP10). Forms filaments with MamK-like protein.

Its subcellular location is the cytoplasm. It localises to the cytoskeleton. The protein resides in the magnetosome membrane. The catalysed reaction is ATP + H2O = ADP + phosphate + H(+). Filament turnover is promoted by MamJ and/or LimJ which have overlapping function; at least one other protein is required for turnover. MamK filament dynamics are probably required for the assembly or maintenance of the magnetosome chain. Its function is as follows. Protein with ATPase activity which forms dynamic cytoplasmic filaments (probably with paralog MamK-like) that organize magnetosomes into long chains running parallel to the long axis of the cell. Turnover of MamK filaments is probably promoted by MamK-like, which provides a monomer pool. Forms twisted filaments in the presence of ATP or GTP. Serves to close gaps between magnetosomes in the chain. Interaction with MCP10 is involved in controlling the response to magnetic fields, possibly by controlling flagellar rotation. Expression in E.coli yields a filament in the cell's longitudinal axis; the protein nucleates at several sites and one extremity of the filament is located at the cell pole. The protein is Actin-like protein MamK (mamK) of Paramagnetospirillum magneticum (strain ATCC 700264 / AMB-1) (Magnetospirillum magneticum).